A 453-amino-acid chain; its full sequence is Ribosomal protein uS12 methylthiotransferase RimO (453 aa).

Positions 6–116 (PTVGIVSLGC…VLTAVHEAIA (111 aa)) constitute an MTTase N-terminal domain. Cys-15, Cys-51, Cys-80, Cys-148, Cys-152, and Cys-155 together coordinate [4Fe-4S] cluster. The region spanning 134-371 (LTPKHFAYLK…MQLQQQISAN (238 aa)) is the Radical SAM core domain. Positions 374 to 440 (QAKIGKTIQV…EYDLWATPVG (67 aa)) constitute a TRAM domain.

Belongs to the methylthiotransferase family. RimO subfamily. It depends on [4Fe-4S] cluster as a cofactor.

Its subcellular location is the cytoplasm. The catalysed reaction is L-aspartate(89)-[ribosomal protein uS12]-hydrogen + (sulfur carrier)-SH + AH2 + 2 S-adenosyl-L-methionine = 3-methylsulfanyl-L-aspartate(89)-[ribosomal protein uS12]-hydrogen + (sulfur carrier)-H + 5'-deoxyadenosine + L-methionine + A + S-adenosyl-L-homocysteine + 2 H(+). Catalyzes the methylthiolation of an aspartic acid residue of ribosomal protein uS12. This Hydrogenovibrio crunogenus (strain DSM 25203 / XCL-2) (Thiomicrospira crunogena) protein is Ribosomal protein uS12 methylthiotransferase RimO.